A 200-amino-acid chain; its full sequence is FMN-dependent NADH:quinone oxidoreductase (200 aa).

Residues serine 10, 96-99, and 140-143 each bind FMN; these read MYNF and SRGG.

This sequence belongs to the azoreductase type 1 family. Homodimer. FMN serves as cofactor.

It carries out the reaction 2 a quinone + NADH + H(+) = 2 a 1,4-benzosemiquinone + NAD(+). It catalyses the reaction N,N-dimethyl-1,4-phenylenediamine + anthranilate + 2 NAD(+) = 2-(4-dimethylaminophenyl)diazenylbenzoate + 2 NADH + 2 H(+). Its function is as follows. Quinone reductase that provides resistance to thiol-specific stress caused by electrophilic quinones. Functionally, also exhibits azoreductase activity. Catalyzes the reductive cleavage of the azo bond in aromatic azo compounds to the corresponding amines. This Photorhabdus laumondii subsp. laumondii (strain DSM 15139 / CIP 105565 / TT01) (Photorhabdus luminescens subsp. laumondii) protein is FMN-dependent NADH:quinone oxidoreductase.